Reading from the N-terminus, the 540-residue chain is Chaperonin GroEL 4 (540 aa).

Residues 29–32 (TLGP), 86–90 (DGTTT), Gly413, 477–479 (NAA), and Asp493 contribute to the ATP site.

This sequence belongs to the chaperonin (HSP60) family. In terms of assembly, forms a cylinder of 14 subunits composed of two heptameric rings stacked back-to-back. Interacts with the co-chaperonin GroES.

The protein localises to the cytoplasm. The enzyme catalyses ATP + H2O + a folded polypeptide = ADP + phosphate + an unfolded polypeptide.. Functionally, together with its co-chaperonin GroES, plays an essential role in assisting protein folding. The GroEL-GroES system forms a nano-cage that allows encapsulation of the non-native substrate proteins and provides a physical environment optimized to promote and accelerate protein folding. In Frankia alni (strain DSM 45986 / CECT 9034 / ACN14a), this protein is Chaperonin GroEL 4.